We begin with the raw amino-acid sequence, 445 residues long: Phosphoglucosamine mutase (445 aa).

The Phosphoserine intermediate role is filled by Ser-104. 4 residues coordinate Mg(2+): Ser-104, Asp-243, Asp-245, and Asp-247. The residue at position 104 (Ser-104) is a Phosphoserine.

This sequence belongs to the phosphohexose mutase family. Mg(2+) is required as a cofactor. Activated by phosphorylation.

The catalysed reaction is alpha-D-glucosamine 1-phosphate = D-glucosamine 6-phosphate. Functionally, catalyzes the conversion of glucosamine-6-phosphate to glucosamine-1-phosphate. In Chromobacterium violaceum (strain ATCC 12472 / DSM 30191 / JCM 1249 / CCUG 213 / NBRC 12614 / NCIMB 9131 / NCTC 9757 / MK), this protein is Phosphoglucosamine mutase.